The sequence spans 462 residues: MTLTIVVGLGRSGLGAARLLHHQGQKVVVLERGTGPDQTSCAATLQAEGIQVELGIPLEINSFEPWRSDLDAVVVGPGIPWDHPTLNGLRQEGVQIRGEIELAWEALNDIPWVGITGTNGKTTVTHLLSHVLGHAGIVAPMGGNMGVSAADMALKIRRGETPKPDWLVMELSSYQIEAGPNLAPSIGIWTTLTPDHLERHGTLEAYRAIKHSLLQRSSLAIFNGDDADLSAHRPSLKRGMWVKAAPPCHDDPPADFWIDDAGTVQAREGGAMFPAKVLAMPGAHNRQNLLLVTAAAAQIGLNAEQIAQGLESFPGVPHRLENLGSTSSADVFNDSKATNYDAAAVGLQAMAGPVVVLAGGQTKRGNATGWLAELKSKACAVVLFGAGAEELDALIRQSNYQGQVHRCTDLSAAVAIAVRATSELQASSLLLSPACASFDQYQDFEARGDHFRDLMQPHMHVG.

117–123 lines the ATP pocket; it reads GTNGKTT.

It belongs to the MurCDEF family.

It localises to the cytoplasm. It catalyses the reaction UDP-N-acetyl-alpha-D-muramoyl-L-alanine + D-glutamate + ATP = UDP-N-acetyl-alpha-D-muramoyl-L-alanyl-D-glutamate + ADP + phosphate + H(+). Its pathway is cell wall biogenesis; peptidoglycan biosynthesis. Cell wall formation. Catalyzes the addition of glutamate to the nucleotide precursor UDP-N-acetylmuramoyl-L-alanine (UMA). In Synechococcus sp. (strain CC9902), this protein is UDP-N-acetylmuramoylalanine--D-glutamate ligase.